The sequence spans 173 residues: uncharacterized protein (173 aa).

The segment at 80-107 (HSATVKRTDSSHRLKSHVVDKRPRRSLD) is disordered. Positions 85-107 (KRTDSSHRLKSHVVDKRPRRSLD) are enriched in basic and acidic residues.

This is an uncharacterized protein from Autographa californica nuclear polyhedrosis virus (AcMNPV).